The chain runs to 274 residues: Bis(5'-nucleosyl)-tetraphosphatase, symmetrical (274 aa).

The protein belongs to the Ap4A hydrolase family.

It carries out the reaction P(1),P(4)-bis(5'-adenosyl) tetraphosphate + H2O = 2 ADP + 2 H(+). Its function is as follows. Hydrolyzes diadenosine 5',5'''-P1,P4-tetraphosphate to yield ADP. The polypeptide is Bis(5'-nucleosyl)-tetraphosphatase, symmetrical (Shewanella oneidensis (strain ATCC 700550 / JCM 31522 / CIP 106686 / LMG 19005 / NCIMB 14063 / MR-1)).